Reading from the N-terminus, the 449-residue chain is Lipase (449 aa).

Residues M1–A23 form the signal peptide. A disordered region spans residues R58–K77. S206 serves as the catalytic Charge relay system. The Ca(2+) site is built by G318, D387, and D396. Hemolysin-type calcium-binding repeat units lie at residues I372–I389 and E390–F407.

The protein belongs to the AB hydrolase superfamily. Lipase family.

The catalysed reaction is a triacylglycerol + H2O = a diacylglycerol + a fatty acid + H(+). In Pseudomonas fluorescens, this protein is Lipase.